A 376-amino-acid polypeptide reads, in one-letter code: N-acetyldiaminopimelate deacetylase (376 aa).

Asp69 is an active-site residue. Glu128 serves as the catalytic Proton acceptor.

The protein belongs to the peptidase M20A family. N-acetyldiaminopimelate deacetylase subfamily.

It carries out the reaction N-acetyl-(2S,6S)-2,6-diaminopimelate + H2O = (2S,6S)-2,6-diaminopimelate + acetate. The protein operates within amino-acid biosynthesis; L-lysine biosynthesis via DAP pathway; LL-2,6-diaminopimelate from (S)-tetrahydrodipicolinate (acetylase route): step 3/3. Its function is as follows. Catalyzes the conversion of N-acetyl-diaminopimelate to diaminopimelate and acetate. The sequence is that of N-acetyldiaminopimelate deacetylase from Bacillus cereus (strain ATCC 14579 / DSM 31 / CCUG 7414 / JCM 2152 / NBRC 15305 / NCIMB 9373 / NCTC 2599 / NRRL B-3711).